Reading from the N-terminus, the 939-residue chain is Progesterone receptor (939 aa).

Over residues 1–11 (MTERTGKDARA) the composition is skewed to basic and acidic residues. An AF3; mediates transcriptional activation (in isoform B) region spans residues 1–174 (MTERTGKDAR…RSSQGAACPL (174 aa)). The interval 1 to 302 (MTERTGKDAR…AEQDAPAPGC (302 aa)) is disordered. Residues 1–572 (MTERTGKDAR…YSFESLPQKI (572 aa)) are modulating, Ala/Pro-rich. A Glycyl lysine isopeptide (Lys-Gly) (interchain with G-Cter in SUMO) cross-link involves residue Lys-7. Residues 15–26 (AGGAPSPAPAAE) are compositionally biased toward low complexity. Ser-20 is subject to Phosphoserine. The span at 27 to 36 (PESRRRDGGR) shows a compositional bias: basic and acidic residues. Residues 49-67 (AAAAAAAAAAASAAPSAPS) are compositionally biased toward low complexity. Ser-141 is modified (phosphoserine). Positions 175-314 (MSRPEGKAGD…LATTMMDFIH (140 aa)) are mediates transcriptional transrepression (in isoform A). The short motif at 193–197 (KGPPR) is the Nuclear localization signal element. A Phosphoserine modification is found at Ser-200. Composition is skewed to low complexity over residues 211-230 (GAHA…AALG) and 257-278 (PAAA…TAPV). Ser-303 is subject to Phosphoserine; by MAPK1. Phosphoserine; by MAPK is present on Ser-349. Residue Lys-392 forms a Glycyl lysine isopeptide (Lys-Gly) (interchain with G-Cter in SUMO); alternate linkage. A Glycyl lysine isopeptide (Lys-Gly) (interchain with G-Cter in ubiquitin); alternate cross-link involves residue Lys-392. Position 404 is a phosphoserine; by CDK2 (Ser-404). Positions 463–552 (PALECVLYKA…VYQPYLNYLR (90 aa)) are AF1; mediates transcriptional activation. Lys-537 is covalently cross-linked (Glycyl lysine isopeptide (Lys-Gly) (interchain with G-Cter in SUMO)). 2 consecutive NR C4-type zinc fingers follow at residues 573-593 (CLIC…CGSC) and 609-633 (CAGR…LRKC). Positions 573 to 645 (CLICGDEASG…AGMVLGGRKF (73 aa)) form a DNA-binding region, nuclear receptor. Phosphoserine is present on Ser-682. One can recognise an NR LBD domain in the interval 685–919 (QDIQLIPPLI…EFPEMMSEVI (235 aa)). The segment at 693–939 (LINLLMSIEP…MVKPLLFHKK (247 aa)) is AF2; mediates transcriptional activation.

Belongs to the nuclear hormone receptor family. NR3 subfamily. As to quaternary structure, interacts with SMARD1 and UNC45A. Interacts with CUEDC2; the interaction promotes ubiquitination, decreases sumoylation, and represses transcriptional activity. Interacts with PIAS3; the interaction promotes sumoylation of PR in a hormone-dependent manner, inhibits DNA-binding, and alters nuclear export. Interacts with SP1; the interaction requires ligand-induced phosphorylation on Ser-349 by ERK1/2-MAPK. Interacts with PRMT2. Isoform A interacts with NCOR2. Isoform B (but not isoform A) interacts with NCOA2 and NCOA1. Isoform B (but not isoform A) interacts with KLF9. Interacts with GTF2B. Post-translationally, phosphorylated on multiple serine sites. Several of these sites are hormone-dependent. Phosphorylation on Ser-303 occurs preferentially on isoform B, is highly hormone-dependent and modulates ubiquitination and sumoylation on Lys-392. Phosphorylation on Ser-303 and Ser-349 also requires induction by hormone. Basal phosphorylation on Ser-200 and Ser-404 is increased in response to progesterone and can be phosphorylated in vitro by the CDK2-A1 complex. Increased levels of phosphorylation on Ser-404 also in the presence of EGF, heregulin, IGF, PMA and FBS. Phosphorylation at this site by CDK2 is ligand-independent, and increases nuclear translocation and transcriptional activity. Phosphorylation at Ser-303, but not at Ser-200, is impaired during the G(2)/M phase of the cell cycle. Phosphorylation on Ser-349 by ERK1/2 MAPK is required for interaction with SP1. Sumoylation is hormone-dependent and represses transcriptional activity. Sumoylation on all three sites is enhanced by PIAS3. Desumoylated by SENP1. Sumoylation on Lys-392, the main site of sumoylation, is repressed by ubiquitination on the same site, and modulated by phosphorylation at Ser-303. In terms of processing, ubiquitination is hormone-dependent and represses sumoylation on the same site. Promoted by MAPK-mediated phosphorylation on Ser-303. Post-translationally, palmitoylated by ZDHHC7 and ZDHHC21. Palmitoylation is required for plasma membrane targeting and for rapid intracellular signaling via ERK and AKT kinases and cAMP generation. Expressed in mammary gland and uterus.

It is found in the nucleus. The protein resides in the cytoplasm. In terms of biological role, the steroid hormones and their receptors are involved in the regulation of eukaryotic gene expression and affect cellular proliferation and differentiation in target tissues. Depending on the isoform, progesterone receptor functions as a transcriptional activator or repressor. Ligand-dependent transdominant repressor of steroid hormone receptor transcriptional activity including repression of its isoform B, MR and ER. Transrepressional activity may involve recruitment of corepressor NCOR2. Functionally, transcriptional activator of several progesteron-dependent promoters in a variety of cell types. Involved in activation of SRC-dependent MAPK signaling on hormone stimulation. The sequence is that of Progesterone receptor (PGR) from Canis lupus familiaris (Dog).